A 326-amino-acid polypeptide reads, in one-letter code: Ribosomal large subunit pseudouridine synthase D (326 aa).

Residues 18–91 form the S4 RNA-binding domain; sequence QRLDQALAEM…IPLDIVYEDE (74 aa). Aspartate 139 is an active-site residue.

Belongs to the pseudouridine synthase RluA family.

The protein resides in the cytoplasm. The catalysed reaction is uridine(1911/1915/1917) in 23S rRNA = pseudouridine(1911/1915/1917) in 23S rRNA. In terms of biological role, responsible for synthesis of pseudouridine from uracil at positions 1911, 1915 and 1917 in 23S ribosomal RNA. The protein is Ribosomal large subunit pseudouridine synthase D (rluD) of Shigella flexneri.